A 354-amino-acid chain; its full sequence is Ferredoxin--NADP reductase, chloroplastic (354 aa).

Residues 1 to 35 (MASLRKPSNHADRACSRRLRVATRVAGRRMCRPVA) constitute a chloroplast transit peptide. The region spanning 69-198 (KAPFKAKVRS…TGPTGKVLLL (130 aa)) is the FAD-binding FR-type domain. N6,N6,N6-trimethyllysine occurs at positions 118 and 124. FAD is bound by residues 130-133 (RLYS), 151-153 (CVR), and Tyr-157. Residues Ser-133 and Arg-153 each contribute to the NADP(+) site. N6,N6-dimethyllysine is present on Lys-170. FAD contacts are provided by residues 172-174 (LCS) and Thr-213. Residues Thr-213, 245–246 (VG), 275–276 (SR), Lys-285, 313–314 (GL), and Glu-352 contribute to the NADP(+) site.

The protein belongs to the ferredoxin--NADP reductase type 1 family. FAD serves as cofactor.

It is found in the plastid. Its subcellular location is the chloroplast stroma. The protein localises to the chloroplast thylakoid membrane. The catalysed reaction is 2 reduced [2Fe-2S]-[ferredoxin] + NADP(+) + H(+) = 2 oxidized [2Fe-2S]-[ferredoxin] + NADPH. Its pathway is energy metabolism; photosynthesis. In terms of biological role, may play a key role in regulating the relative amounts of cyclic and non-cyclic electron flow to meet the demands of the plant for ATP and reducing power. In Chlamydomonas reinhardtii (Chlamydomonas smithii), this protein is Ferredoxin--NADP reductase, chloroplastic (PETH).